Here is a 198-residue protein sequence, read N- to C-terminus: Peptidyl-tRNA hydrolase (198 aa).

Y15 is a binding site for tRNA. H20 functions as the Proton acceptor in the catalytic mechanism. TRNA is bound by residues F66, N68, and N114.

It belongs to the PTH family. As to quaternary structure, monomer.

Its subcellular location is the cytoplasm. The enzyme catalyses an N-acyl-L-alpha-aminoacyl-tRNA + H2O = an N-acyl-L-amino acid + a tRNA + H(+). In terms of biological role, hydrolyzes ribosome-free peptidyl-tRNAs (with 1 or more amino acids incorporated), which drop off the ribosome during protein synthesis, or as a result of ribosome stalling. Catalyzes the release of premature peptidyl moieties from peptidyl-tRNA molecules trapped in stalled 50S ribosomal subunits, and thus maintains levels of free tRNAs and 50S ribosomes. The polypeptide is Peptidyl-tRNA hydrolase (Cupriavidus metallidurans (strain ATCC 43123 / DSM 2839 / NBRC 102507 / CH34) (Ralstonia metallidurans)).